An 80-amino-acid polypeptide reads, in one-letter code: Small ribosomal subunit protein uS17 (80 aa).

Belongs to the universal ribosomal protein uS17 family. Part of the 30S ribosomal subunit.

In terms of biological role, one of the primary rRNA binding proteins, it binds specifically to the 5'-end of 16S ribosomal RNA. This Beijerinckia indica subsp. indica (strain ATCC 9039 / DSM 1715 / NCIMB 8712) protein is Small ribosomal subunit protein uS17.